Consider the following 261-residue polypeptide: Cytochrome c oxidase subunit 3 (261 aa).

The Mitochondrial matrix segment spans residues 1 to 15 (MAHQAHPYHMVDPSP). The helical transmembrane segment at 16-34 (WPLTGATAALLMTSGLAIW) threads the bilayer. Topologically, residues 35–40 (FHFHSL) are mitochondrial intermembrane. The helical transmembrane segment at 41-66 (LLLYLGLTLLLLTMIQWWRDIIREGT) threads the bilayer. At 67-72 (FQGHHT) the chain is on the mitochondrial matrix side. The helical transmembrane segment at 73-105 (PPVQKGLRYGMILFIVSEVFFFLGFFWAFYHSS) threads the bilayer. At 106–128 (LAPTPELGGCWPPTGINPLDPFE) the chain is on the mitochondrial intermembrane side. Residues 129–152 (VPLLNTAVLLASGVTVTWAHHGLM) form a helical membrane-spanning segment. Residues 153–155 (EGN) lie on the Mitochondrial matrix side of the membrane. Residues 156–183 (RKEAIQALTLTIILGVYFTALQAMEYYE) form a helical membrane-spanning segment. Residues 184 to 190 (APFTIAD) lie on the Mitochondrial intermembrane side of the membrane. The chain crosses the membrane as a helical span at residues 191–223 (GVYGTTFFVATGFHGLHVIIGSTFLAVCLLRQV). Topologically, residues 224–232 (LYHFTSEHH) are mitochondrial matrix. The chain crosses the membrane as a helical span at residues 233-256 (FGFEAAAWYWHFVDVVWLFLYVSI). At 257–261 (YWWGS) the chain is on the mitochondrial intermembrane side.

This sequence belongs to the cytochrome c oxidase subunit 3 family. In terms of assembly, component of the cytochrome c oxidase (complex IV, CIV), a multisubunit enzyme composed of 14 subunits. The complex is composed of a catalytic core of 3 subunits MT-CO1, MT-CO2 and MT-CO3, encoded in the mitochondrial DNA, and 11 supernumerary subunits COX4I, COX5A, COX5B, COX6A, COX6B, COX6C, COX7A, COX7B, COX7C, COX8 and NDUFA4, which are encoded in the nuclear genome. The complex exists as a monomer or a dimer and forms supercomplexes (SCs) in the inner mitochondrial membrane with NADH-ubiquinone oxidoreductase (complex I, CI) and ubiquinol-cytochrome c oxidoreductase (cytochrome b-c1 complex, complex III, CIII), resulting in different assemblies (supercomplex SCI(1)III(2)IV(1) and megacomplex MCI(2)III(2)IV(2)).

The protein resides in the mitochondrion inner membrane. It catalyses the reaction 4 Fe(II)-[cytochrome c] + O2 + 8 H(+)(in) = 4 Fe(III)-[cytochrome c] + 2 H2O + 4 H(+)(out). Functionally, component of the cytochrome c oxidase, the last enzyme in the mitochondrial electron transport chain which drives oxidative phosphorylation. The respiratory chain contains 3 multisubunit complexes succinate dehydrogenase (complex II, CII), ubiquinol-cytochrome c oxidoreductase (cytochrome b-c1 complex, complex III, CIII) and cytochrome c oxidase (complex IV, CIV), that cooperate to transfer electrons derived from NADH and succinate to molecular oxygen, creating an electrochemical gradient over the inner membrane that drives transmembrane transport and the ATP synthase. Cytochrome c oxidase is the component of the respiratory chain that catalyzes the reduction of oxygen to water. Electrons originating from reduced cytochrome c in the intermembrane space (IMS) are transferred via the dinuclear copper A center (CU(A)) of subunit 2 and heme A of subunit 1 to the active site in subunit 1, a binuclear center (BNC) formed by heme A3 and copper B (CU(B)). The BNC reduces molecular oxygen to 2 water molecules using 4 electrons from cytochrome c in the IMS and 4 protons from the mitochondrial matrix. This is Cytochrome c oxidase subunit 3 (MT-CO3) from Scyliorhinus canicula (Small-spotted catshark).